A 273-amino-acid chain; its full sequence is Putative carboxymethylenebutenolidase (273 aa).

Active-site residues include C130, D191, and H223.

The protein belongs to the dienelactone hydrolase family.

The enzyme catalyses 2-(5-oxo-2,5-dihydrofuran-2-ylidene)acetate + H2O = 4-oxohex-2-enedioate + H(+). This Saccharomyces cerevisiae (strain ATCC 204508 / S288c) (Baker's yeast) protein is Putative carboxymethylenebutenolidase.